Here is a 989-residue protein sequence, read N- to C-terminus: DEAD-box ATP-dependent RNA helicase 45 (989 aa).

Composition is skewed to basic and acidic residues over residues 1–39 (MLEK…KRCD) and 64–101 (RDSK…EKEK). 2 disordered regions span residues 1–248 (MLEK…AADE) and 305–330 (QGED…DDEE). Residues 88 to 182 (LKRDRERRER…ELKRQNEEAQ (95 aa)) are a coiled coil. Phosphoserine is present on Ser-119. Basic and acidic residues predominate over residues 134-179 (SRHGDDDVEKKTRDEQVEDEQKQLAEEVEKRRRRVQEWQELKRQNE). Ser-200 carries the post-translational modification Phosphoserine. A compositionally biased stretch (basic and acidic residues) spans 203-222 (EVKSDSEMDVDRDTKLENGG). A compositionally biased stretch (polar residues) spans 230–239 (ENETAVTVSE). Acidic residues predominate over residues 321–330 (DPSLDEDDEE). Positions 396-424 (QFWHQTGLTSKILDTLKKLNYEKPMPIQA) match the Q motif motif. One can recognise a Helicase ATP-binding domain in the interval 427–605 (LPIIMSGRDC…RKVLNKPVEI (179 aa)). 440–447 (AKTGSGKT) is a binding site for ATP. The DEAD box motif lies at 553–556 (DEAD). Residues 590–748 (QVETLARKVL…PVPDDVKAVA (159 aa)) form the Helicase C-terminal domain.

It belongs to the DEAD box helicase family. DDX46/PRP5 subfamily.

It catalyses the reaction ATP + H2O = ADP + phosphate + H(+). This Arabidopsis thaliana (Mouse-ear cress) protein is DEAD-box ATP-dependent RNA helicase 45 (RH45).